The following is a 212-amino-acid chain: External core antigen (212 aa).

Residues 1-19 form the signal peptide; sequence MQLFHLCLIISCSCPTVQA. Residues 25–27 are HBEAG; that stretch reads GWL. Residues 165–212 are disordered; sequence NAPILSTLPETTVVRRRGRSPRRRTPSPRRRRSQSPRRRRSQSRESQC. The span at 178 to 205 shows a compositional bias: basic residues; the sequence is VRRRGRSPRRRTPSPRRRRSQSPRRRRS. The stretch at 184 to 190 is one 1; half-length repeat; sequence SPRRRTP. The segment at 184–206 is 3 X 8 AA repeats of S-P-R-R-R-R-S-Q; the sequence is SPRRRTPSPRRRRSQSPRRRRSQ. The propeptide occupies 184 to 212; the sequence is SPRRRTPSPRRRRSQSPRRRRSQSRESQC. Repeat copies occupy residues 191 to 198 and 199 to 206.

The protein belongs to the orthohepadnavirus precore antigen family. In terms of assembly, homodimerizes. Phosphorylated. In terms of processing, cleaved by host furin.

Its subcellular location is the secreted. The protein resides in the host nucleus. May regulate immune response to the intracellular capsid in acting as a T-cell tolerogen, by having an immunoregulatory effect which prevents destruction of infected cells by cytotoxic T-cells. This immune regulation may predispose to chronicity during perinatal infections and prevent severe liver injury during adult infections. This is External core antigen from Hepatitis B virus genotype B2 (isolate Indonesia/pIDW420/1988) (HBV-B).